The primary structure comprises 171 residues: Tetratricopeptide repeat protein 9C (171 aa).

3 TPR repeats span residues 8-41 (AQLY…LRGL), 72-107 (TDCY…QPDN), and 108-141 (AKAL…QPKD).

Belongs to the TTC9 family.

The sequence is that of Tetratricopeptide repeat protein 9C (TTC9C) from Homo sapiens (Human).